Reading from the N-terminus, the 208-residue chain is Small ribosomal subunit protein uS4 (208 aa).

Residues 98–158 (RRLDNVVYRL…EKSRKIACIN (61 aa)) enclose the S4 RNA-binding domain.

The protein belongs to the universal ribosomal protein uS4 family. In terms of assembly, part of the 30S ribosomal subunit. Contacts protein S5. The interaction surface between S4 and S5 is involved in control of translational fidelity.

In terms of biological role, one of the primary rRNA binding proteins, it binds directly to 16S rRNA where it nucleates assembly of the body of the 30S subunit. Its function is as follows. With S5 and S12 plays an important role in translational accuracy. The sequence is that of Small ribosomal subunit protein uS4 from Geobacter sulfurreducens (strain ATCC 51573 / DSM 12127 / PCA).